Consider the following 199-residue polypeptide: uncharacterized protein (199 aa).

The helical transmembrane segment at 17–37 (AGAVTLGIGFFALASALWFLI) threads the bilayer.

It is found in the membrane. This is an uncharacterized protein from Homo sapiens (Human).